A 237-amino-acid polypeptide reads, in one-letter code: Uridylate kinase (237 aa).

11–14 (KLSG) lines the ATP pocket. Position 53 (Gly-53) interacts with UMP. ATP is bound by residues Gly-54 and Arg-58. UMP contacts are provided by residues Asp-73 and 134–141 (TGNPFFTT). Residues Thr-161, Tyr-167, and Asp-170 each coordinate ATP.

It belongs to the UMP kinase family. As to quaternary structure, homohexamer.

It localises to the cytoplasm. It catalyses the reaction UMP + ATP = UDP + ADP. The protein operates within pyrimidine metabolism; CTP biosynthesis via de novo pathway; UDP from UMP (UMPK route): step 1/1. With respect to regulation, inhibited by UTP. Functionally, catalyzes the reversible phosphorylation of UMP to UDP. The sequence is that of Uridylate kinase from Burkholderia vietnamiensis (strain G4 / LMG 22486) (Burkholderia cepacia (strain R1808)).